A 382-amino-acid polypeptide reads, in one-letter code: RNA binding protein fox-1 homolog 1 (382 aa).

Residues 1-121 (MNCEREQLRG…NKSQPKRLHV (121 aa)) form a disordered region. The span at 70-87 (QTHSEQSPADTSAQTVSG) shows a compositional bias: polar residues. Over residues 88–99 (TATQTDDAAPTD) the composition is skewed to low complexity. The span at 100–113 (GQPQTQPSENTENK) shows a compositional bias: polar residues. In terms of domain architecture, RRM spans 117–193 (KRLHVSNIPF…RKIEVNNATA (77 aa)). R317 bears the Asymmetric dimethylarginine mark. A disordered region spans residues 357-382 (MPQGSSPSTDFRGAKLHTSRPLLSGS).

Binds to the C-terminus of ATXN2.

It is found in the nucleus. Its subcellular location is the cytoplasm. RNA-binding protein that regulates alternative splicing events by binding to 5'-UGCAUGU-3' elements. Prevents binding of U2AF2 to the 3'-splice site. Regulates alternative splicing of tissue-specific exons and of differentially spliced exons during erythropoiesis. In Pongo abelii (Sumatran orangutan), this protein is RNA binding protein fox-1 homolog 1 (RBFOX1).